A 256-amino-acid polypeptide reads, in one-letter code: Phosphonates import ATP-binding protein PhnC (256 aa).

Residues 2-246 (LKVIQLDKTY…VLQHIYRQPD (245 aa)) enclose the ABC transporter domain. 35–42 (GPSGAGKT) provides a ligand contact to ATP.

This sequence belongs to the ABC transporter superfamily. Phosphonates importer (TC 3.A.1.9.1) family. The complex is composed of two ATP-binding proteins (PhnC), two transmembrane proteins (PhnE) and a solute-binding protein (PhnD).

The protein localises to the cell membrane. The catalysed reaction is phosphonate(out) + ATP + H2O = phosphonate(in) + ADP + phosphate + H(+). Its function is as follows. Part of the ABC transporter complex PhnCDE involved in phosphonates import. Responsible for energy coupling to the transport system. The polypeptide is Phosphonates import ATP-binding protein PhnC (Lactiplantibacillus plantarum (strain ATCC BAA-793 / NCIMB 8826 / WCFS1) (Lactobacillus plantarum)).